The sequence spans 359 residues: tRNA-specific 2-thiouridylase MnmA (359 aa).

ATP contacts are provided by residues 11–18 (GISGGVDS) and Ile37. The Nucleophile role is filled by Cys99. Cysteines 99 and 195 form a disulfide. Residue Gly123 coordinates ATP. Residues 145–147 (KDQ) are interaction with tRNA. Residue Cys195 is the Cysteine persulfide intermediate of the active site. The interval 304–305 (RY) is interaction with tRNA.

The protein belongs to the MnmA/TRMU family.

The protein localises to the cytoplasm. The enzyme catalyses S-sulfanyl-L-cysteinyl-[protein] + uridine(34) in tRNA + AH2 + ATP = 2-thiouridine(34) in tRNA + L-cysteinyl-[protein] + A + AMP + diphosphate + H(+). Functionally, catalyzes the 2-thiolation of uridine at the wobble position (U34) of tRNA, leading to the formation of s(2)U34. This chain is tRNA-specific 2-thiouridylase MnmA, found in Chlorobium phaeobacteroides (strain BS1).